A 106-amino-acid polypeptide reads, in one-letter code: Iron-sulfur cluster assembly protein CyaY (106 aa).

It belongs to the frataxin family.

Its function is as follows. Involved in iron-sulfur (Fe-S) cluster assembly. May act as a regulator of Fe-S biogenesis. This is Iron-sulfur cluster assembly protein CyaY from Escherichia coli O9:H4 (strain HS).